The chain runs to 225 residues: MAEQKYRYTLHAVVREEQGKGASRRLRRQGLVPAIIYGGNTEPQAIAIKQDELKKNAKNHSFFSQIINLKIDGQEDQEILVRDVQHHIYKPLFQHFDFQRIVRGQEITATVLLEFVGEERAPGIKTDGGIVSRHMTTVEVICRPSLLPEYIAVDLSEANIGDIITLADLKLPEGVRLVGDMEDEEFAATVVVQISYPQREEQMEDTDTAAADEEGDKEEDADKQE.

Residues 197-225 (PQREEQMEDTDTAAADEEGDKEEDADKQE) are disordered. The span at 202 to 225 (QMEDTDTAAADEEGDKEEDADKQE) shows a compositional bias: acidic residues.

The protein belongs to the bacterial ribosomal protein bL25 family. CTC subfamily. As to quaternary structure, part of the 50S ribosomal subunit; part of the 5S rRNA/L5/L18/L25 subcomplex. Contacts the 5S rRNA. Binds to the 5S rRNA independently of L5 and L18.

In terms of biological role, this is one of the proteins that binds to the 5S RNA in the ribosome where it forms part of the central protuberance. The polypeptide is Large ribosomal subunit protein bL25 (Dichelobacter nodosus (strain VCS1703A)).